The primary structure comprises 437 residues: ATP-dependent protease ATPase subunit HslU (437 aa).

ATP contacts are provided by residues Val-18, Gly-60–Glu-65, Asp-250, Glu-315, and Arg-387.

Belongs to the ClpX chaperone family. HslU subfamily. In terms of assembly, a double ring-shaped homohexamer of HslV is capped on each side by a ring-shaped HslU homohexamer. The assembly of the HslU/HslV complex is dependent on binding of ATP.

It localises to the cytoplasm. Its function is as follows. ATPase subunit of a proteasome-like degradation complex; this subunit has chaperone activity. The binding of ATP and its subsequent hydrolysis by HslU are essential for unfolding of protein substrates subsequently hydrolyzed by HslV. HslU recognizes the N-terminal part of its protein substrates and unfolds these before they are guided to HslV for hydrolysis. This is ATP-dependent protease ATPase subunit HslU from Methylobacterium nodulans (strain LMG 21967 / CNCM I-2342 / ORS 2060).